The primary structure comprises 222 residues: Phosphoribosylformylglycinamidine synthase subunit PurQ (222 aa).

One can recognise a Glutamine amidotransferase type-1 domain in the interval 2–222 (KAAVITFPGS…RALLGGMALV (221 aa)). Cys86 acts as the Nucleophile in catalysis. Active-site residues include His194 and Glu196.

As to quaternary structure, part of the FGAM synthase complex composed of 1 PurL, 1 PurQ and 2 PurS subunits.

Its subcellular location is the cytoplasm. The catalysed reaction is N(2)-formyl-N(1)-(5-phospho-beta-D-ribosyl)glycinamide + L-glutamine + ATP + H2O = 2-formamido-N(1)-(5-O-phospho-beta-D-ribosyl)acetamidine + L-glutamate + ADP + phosphate + H(+). It carries out the reaction L-glutamine + H2O = L-glutamate + NH4(+). The protein operates within purine metabolism; IMP biosynthesis via de novo pathway; 5-amino-1-(5-phospho-D-ribosyl)imidazole from N(2)-formyl-N(1)-(5-phospho-D-ribosyl)glycinamide: step 1/2. Functionally, part of the phosphoribosylformylglycinamidine synthase complex involved in the purines biosynthetic pathway. Catalyzes the ATP-dependent conversion of formylglycinamide ribonucleotide (FGAR) and glutamine to yield formylglycinamidine ribonucleotide (FGAM) and glutamate. The FGAM synthase complex is composed of three subunits. PurQ produces an ammonia molecule by converting glutamine to glutamate. PurL transfers the ammonia molecule to FGAR to form FGAM in an ATP-dependent manner. PurS interacts with PurQ and PurL and is thought to assist in the transfer of the ammonia molecule from PurQ to PurL. This is Phosphoribosylformylglycinamidine synthase subunit PurQ from Cereibacter sphaeroides (strain ATCC 17023 / DSM 158 / JCM 6121 / CCUG 31486 / LMG 2827 / NBRC 12203 / NCIMB 8253 / ATH 2.4.1.) (Rhodobacter sphaeroides).